The following is a 155-amino-acid chain: MAKGEGNVLAQHKKARHDYHIVETVEAGIVLTGTEIKSVRAARIQLKDGFAQIKNGEAWLVNVHIAPFEQGNIWNADPERTRKLLLKKREIQHLADELKGTGMTLVPLKVYLKDGFAKVLIGLAKGKHDYDKRESIKRREQDRDIRRVMKSVNRR.

This sequence belongs to the SmpB family.

It localises to the cytoplasm. Functionally, required for rescue of stalled ribosomes mediated by trans-translation. Binds to transfer-messenger RNA (tmRNA), required for stable association of tmRNA with ribosomes. tmRNA and SmpB together mimic tRNA shape, replacing the anticodon stem-loop with SmpB. tmRNA is encoded by the ssrA gene; the 2 termini fold to resemble tRNA(Ala) and it encodes a 'tag peptide', a short internal open reading frame. During trans-translation Ala-aminoacylated tmRNA acts like a tRNA, entering the A-site of stalled ribosomes, displacing the stalled mRNA. The ribosome then switches to translate the ORF on the tmRNA; the nascent peptide is terminated with the 'tag peptide' encoded by the tmRNA and targeted for degradation. The ribosome is freed to recommence translation, which seems to be the essential function of trans-translation. The chain is SsrA-binding protein from Streptococcus equi subsp. zooepidemicus (strain H70).